Consider the following 390-residue polypeptide: Probable purine permease 18 (390 aa).

Over residues 1–14 (MEMTEASKQTTAEG) the composition is skewed to polar residues. Positions 1–23 (MEMTEASKQTTAEGSANPEPDQI) are disordered. Ser-25 carries the post-translational modification Phosphoserine. 10 consecutive transmembrane segments (helical) span residues 39 to 59 (ISVS…MLLL), 81 to 101 (WLQA…FFIF), 120 to 140 (LILL…LFAL), 148 to 168 (GVFT…AAII), 176 to 196 (WIIL…PEFG), 211 to 231 (WLTF…QLCF), 250 to 270 (VIEM…VGLF), 297 to 317 (IGLA…VLYV), 324 to 344 (VVHM…FDFM), and 348 to 368 (FSWP…SYFY).

This sequence belongs to the purine permeases (TC 2.A.7.14) family.

The protein resides in the membrane. The protein is Probable purine permease 18 (PUP18) of Arabidopsis thaliana (Mouse-ear cress).